The chain runs to 208 residues: uncharacterized protein (208 aa).

Disordered stretches follow at residues 74-117 and 181-208; these read FEYK…RDSP and ESKLGSSEDSGTDRFSSNTSGSSGRKFK. Residues 184 to 208 show a composition bias toward polar residues; it reads LGSSEDSGTDRFSSNTSGSSGRKFK.

This is an uncharacterized protein from Mus musculus (Mouse).